The primary structure comprises 412 residues: Cinnamoyl-CoA:phenyllactate CoA-transferase (412 aa).

N102 contributes to the CoA binding site. D176 (nucleophile) is an active-site residue.

In terms of assembly, homodimer. Part of the heterotrimeric phenyllactate dehydratase complex FldABC, composed of (R)-phenyllactate CoA-transferase (FldA) and a heterodimeric (R)-phenyllactyl-CoA dehydratase (FldB and FldC).

The catalysed reaction is (E)-cinnamoyl-CoA + (R)-3-phenyllactate = (R)-3-phenyllactoyl-CoA + (E)-cinnamate. Its pathway is amino-acid degradation; L-phenylalanine degradation. Its function is as follows. Component of the phenyllactate dehydratase complex FldABC that is involved in the fermentation of L-phenylalanine via a Stickland reaction. This complex catalyzes the reversible syn-dehydration of (R)-phenyllactate to (E)-cinnamate in two steps, a CoA-transfer from cinnamoyl-CoA to phenyllactate, catalyzed by FldA, followed by the dehydration of phenyllactyl-CoA to cinnamoyl-CoA, catalyzed by FldB and FldC. In vitro, FldA can use 3-phenylpropanoate as a better CoA-acceptor than phenyllactate. This Clostridium sporogenes protein is Cinnamoyl-CoA:phenyllactate CoA-transferase.